A 104-amino-acid chain; its full sequence is UPF0145 protein VNG_2432C (104 aa).

This sequence belongs to the UPF0145 family.

This chain is UPF0145 protein VNG_2432C, found in Halobacterium salinarum (strain ATCC 700922 / JCM 11081 / NRC-1) (Halobacterium halobium).